We begin with the raw amino-acid sequence, 44 residues long: Cytochrome b559 subunit beta (44 aa).

The helical transmembrane segment at 19–35 (WLAVHTLGVPTVFFLGA) threads the bilayer. H23 contributes to the heme binding site.

It belongs to the PsbE/PsbF family. Heterodimer of an alpha subunit and a beta subunit. PSII is composed of 1 copy each of membrane proteins PsbA, PsbB, PsbC, PsbD, PsbE, PsbF, PsbH, PsbI, PsbJ, PsbK, PsbL, PsbM, PsbT, PsbX, PsbY, PsbZ, Psb30/Ycf12, peripheral proteins PsbO, CyanoQ (PsbQ), PsbU, PsbV and a large number of cofactors. It forms dimeric complexes. Requires heme b as cofactor.

It localises to the cellular thylakoid membrane. Functionally, this b-type cytochrome is tightly associated with the reaction center of photosystem II (PSII). PSII is a light-driven water:plastoquinone oxidoreductase that uses light energy to abstract electrons from H(2)O, generating O(2) and a proton gradient subsequently used for ATP formation. It consists of a core antenna complex that captures photons, and an electron transfer chain that converts photonic excitation into a charge separation. The chain is Cytochrome b559 subunit beta from Trichodesmium erythraeum (strain IMS101).